Here is a 522-residue protein sequence, read N- to C-terminus: Putative ribose/galactose/methyl galactoside import ATP-binding protein (522 aa).

ABC transporter domains follow at residues 7–244 and 254–498; these read LEMV…VGRE and PKLG…TGQA. 39 to 46 contributes to the ATP binding site; the sequence is GENGAGKS.

This sequence belongs to the ABC transporter superfamily. Carbohydrate importer 2 (CUT2) (TC 3.A.1.2) family.

It localises to the cell membrane. It catalyses the reaction D-ribose(out) + ATP + H2O = D-ribose(in) + ADP + phosphate + H(+). The catalysed reaction is D-galactose(out) + ATP + H2O = D-galactose(in) + ADP + phosphate + H(+). Part of an ABC transporter complex involved in carbohydrate import. Could be involved in ribose, galactose and/or methyl galactoside import. Responsible for energy coupling to the transport system. The polypeptide is Putative ribose/galactose/methyl galactoside import ATP-binding protein (Halalkalibacterium halodurans (strain ATCC BAA-125 / DSM 18197 / FERM 7344 / JCM 9153 / C-125) (Bacillus halodurans)).